We begin with the raw amino-acid sequence, 71 residues long: Large ribosomal subunit protein bL31 (71 aa).

Residues Cys16, Cys18, Cys37, and Cys40 each coordinate Zn(2+).

This sequence belongs to the bacterial ribosomal protein bL31 family. Type A subfamily. Part of the 50S ribosomal subunit. Zn(2+) serves as cofactor.

In terms of biological role, binds the 23S rRNA. This chain is Large ribosomal subunit protein bL31, found in Chromohalobacter salexigens (strain ATCC BAA-138 / DSM 3043 / CIP 106854 / NCIMB 13768 / 1H11).